The sequence spans 207 residues: Large ribosomal subunit protein uL4 (207 aa).

The protein belongs to the universal ribosomal protein uL4 family. Part of the 50S ribosomal subunit.

Functionally, one of the primary rRNA binding proteins, this protein initially binds near the 5'-end of the 23S rRNA. It is important during the early stages of 50S assembly. It makes multiple contacts with different domains of the 23S rRNA in the assembled 50S subunit and ribosome. Its function is as follows. Forms part of the polypeptide exit tunnel. The polypeptide is Large ribosomal subunit protein uL4 (Geobacter metallireducens (strain ATCC 53774 / DSM 7210 / GS-15)).